Here is a 329-residue protein sequence, read N- to C-terminus: Helicase VP6-A (329 aa).

Disordered regions lie at residues 27 to 130 (INLV…TNGG) and 189 to 232 (DLRR…SEEP). Composition is skewed to basic and acidic residues over residues 36–58 (EGGK…KDGE), 65–83 (GQKE…DRRI), and 96–109 (SGER…RGDG). Lys110 contacts ATP. Over residues 110–129 (KVGGGGGDADAGVGATGTNG) the composition is skewed to gly residues. 2 stretches are compositionally biased toward basic and acidic residues: residues 189–207 (DLRR…ERGG) and 215–232 (HGDA…SEEP).

This sequence belongs to the reoviruses VP6 family. In terms of assembly, homohexamer.

The protein localises to the virion. The enzyme catalyses ATP + H2O = ADP + phosphate + H(+). ATP dependent RNA helicase essential for RNA packaging and viral transcription. Possesses ss- and dsRNA-binding capacity. The protein is Helicase VP6-A (Segment-9) of Antilocapra americana (Pronghorn).